Consider the following 626-residue polypeptide: Colicin-Ib (626 aa).

The segment covering 276 to 286 (QQLTQQKNTPD) has biased composition (polar residues). A disordered region spans residues 276-308 (QQLTQQKNTPDGKTIVSPEKFPGRSSTNHSIVV). Residues 588–612 (FSVMLGTPVGILGFAIIMAAVSALV) form a helical membrane-spanning segment.

The protein belongs to the channel forming colicin family.

The protein localises to the host membrane. Functionally, this colicin is a channel-forming colicin. This class of transmembrane toxins depolarize the cytoplasmic membrane, leading to dissipation of cellular energy. Its function is as follows. Colicins are polypeptide toxins produced by and active against E.coli and closely related bacteria. The chain is Colicin-Ib (cib) from Escherichia coli.